The chain runs to 254 residues: Axonemal dynein light intermediate polypeptide 1 (254 aa).

The disordered stretch occupies residues 1–55 (MIPPADSLLKHDNPVLISKNTERKSPKSRPLKVSSPQTVLTAPVPPPPKPKTPLL). Residues 175–245 (ALQAEQGKSD…KRTNQQLKAQ (71 aa)) are a coiled coil.

The protein belongs to the inner dynein arm light chain family.

It is found in the cell projection. The protein localises to the cilium. Its subcellular location is the flagellum. The protein resides in the dynein axonemal particle. It localises to the cytoplasm. Involved in sperm flagellum assembly. This chain is Axonemal dynein light intermediate polypeptide 1, found in Xenopus laevis (African clawed frog).